The following is a 258-amino-acid chain: Octanoyltransferase (258 aa).

The BPL/LPL catalytic domain occupies 42-226 (NVGTDTLLLL…AVVAALDGEL (185 aa)). Residues 80-87 (RGGKITWH), 156-158 (AIG), and 169-171 (GFS) contribute to the substrate site. Cys187 serves as the catalytic Acyl-thioester intermediate.

The protein belongs to the LipB family.

It localises to the cytoplasm. The catalysed reaction is octanoyl-[ACP] + L-lysyl-[protein] = N(6)-octanoyl-L-lysyl-[protein] + holo-[ACP] + H(+). It participates in protein modification; protein lipoylation via endogenous pathway; protein N(6)-(lipoyl)lysine from octanoyl-[acyl-carrier-protein]: step 1/2. Catalyzes the transfer of endogenously produced octanoic acid from octanoyl-acyl-carrier-protein onto the lipoyl domains of lipoate-dependent enzymes. Lipoyl-ACP can also act as a substrate although octanoyl-ACP is likely to be the physiological substrate. This chain is Octanoyltransferase, found in Rhodococcus jostii (strain RHA1).